A 672-amino-acid polypeptide reads, in one-letter code: Transcription factor tau 91 kDa subunit (672 aa).

Positions 1–158 are required for DNA-binding; it reads MAVIPAKKRG…SLGQKGRPIR (158 aa). Residues 6-18 constitute a DNA-binding region (a.T hook); the sequence is AKKRGRPRKSVVA. 2 disordered regions span residues 24–45 and 67–156; these read SLASPVSENSGSKRPRRNASKK and VNNV…KGRP. The segment covering 71 to 100 has biased composition (acidic residues); sequence DDTDDDDFVLNDEGDGEESDNVEIEFENEL. The interval 159–672 is sufficient for interaction with TFC8; it reads LLKDLSSARD…AGLLTLEYLS (514 aa). Cys-375 and Cys-383 are oxidised to a cystine.

Heterodimer with TFC8. Component of the TFIIIC complex composed of TFC1, TFC3, TFC4, TFC6, TFC7 and TFC8. The subunits are organized in two globular domains, tauA and tauB, connected by a proteolysis-sensitive and flexible linker. Interacts with TFC1, TFC3, TFC4 and directly with TFC8.

It is found in the nucleus. In terms of biological role, TFIIIC mediates tRNA and 5S RNA gene activation by binding to intragenic promoter elements. Upstream of the transcription start site, TFIIIC assembles the initiation complex TFIIIB-TFIIIC-tDNA, which is sufficient for RNA polymerase III recruitment and function. Part of the tauB domain of TFIIIC that binds boxB DNA promoter sites of tRNA and similar genes. Cooperates with TFC3 in DNA binding. The protein is Transcription factor tau 91 kDa subunit (TFC6) of Saccharomyces cerevisiae (strain ATCC 204508 / S288c) (Baker's yeast).